The following is a 381-amino-acid chain: MNLNFMPLLHAYNHASIDFHFNSSARDFCVHEVPLYEFSNKGEHAIIQVRKSGLSTLEMLQIFSQILGVKIAELGYAGLKDKNALTTQFVSLPKKYAPLLEKNTSNFQERNLKILSLNYHHNKIKLGHLKGNRFFMRFKKMTPLNAHKTKQVLEQIVQFGMPNYFGSQRFGKFNDNHKEGLKILQNEAKFKNQKLNAFLISSYQSYLFNSLLSKRLEISKIISDFSLKEGLEFFKQKNLNIHSNALKALKNQDHPFKILEGDVMCHYPYGKFFDALELEKESERFLKKEAVPMGLLDGKKALYAKNLSLEIEKEFQNHILSDHAKTLGSRRFFWVFVENLTSKYIKEKVQFELEFYLPKGSYASALLKEIKHQKGENNDEF.

D81 functions as the Nucleophile in the catalytic mechanism. Residues 160 to 335 (GMPNYFGSQR…TLGSRRFFWV (176 aa)) form the TRUD domain.

It belongs to the pseudouridine synthase TruD family.

It carries out the reaction uridine(13) in tRNA = pseudouridine(13) in tRNA. Responsible for synthesis of pseudouridine from uracil-13 in transfer RNAs. The polypeptide is tRNA pseudouridine synthase D (Helicobacter acinonychis (strain Sheeba)).